Consider the following 602-residue polypeptide: MQSKGTIISIQFLLRFLLLWVLIGKSHTEEDIIITTKNGKVRGMNLPVLDGTVTAFLGIPYAQPPLGRLRFKKPQFLTKWSDIWNATKHANSCYQNADQSFPGFPGSEMWNPNTDLSEDCLYLNVWSPTPKPKNATVMIWIYGGGFQTGTSSLPVYDGKFLARVERVIVVSMNYRVGALGFLALPGNPEIPGNMGLFDQQLALQWVQKNIAAFGGNPKSVTLFGESAGAGSVSLHLLSPRSQPLFTRAILQSGSSNAPWAVMSLDEAKNRTLTLAKFIGCSKENDTEIIKCLRNKDPQEILLNELLVVPSDTLLSVNFGPVVDGDFLTDMPDTLLQLGQFKKTQILVGVNKDEGTAFLVYGAPGFSKDNDSIITRKEFQEGLKIYFPGVSEFGREAILFYYVDLLDDQRAEKYREALDDVLGDYNIICPALEFTTKFSELGNNAFFYYFEHRSSQLPWPEWMGVMHGYEIEFVFGLPLERRVNYTRAEEILSRSIMNYWANFAKYGNPNGTQNNSTRWPAFRSTDQKYLTLNAESPKVYTKLRAQQCRFWTLFFPKVLEMTGNIDEAEREWRAGFYRWNNYMMDWKNQFNDYTSKKESCAGL.

An N-terminal signal peptide occupies residues 1-28 (MQSKGTIISIQFLLRFLLLWVLIGKSHT). Asparagine 85 carries N-linked (GlcNAc...) asparagine glycosylation. A disulfide bond links cysteine 93 and cysteine 120. Residue asparagine 134 is glycosylated (N-linked (GlcNAc...) asparagine). 144 to 145 (GG) is a substrate binding site. Serine 226 serves as the catalytic Acyl-ester intermediate. Serine 226 is subject to Phosphoserine. 2 N-linked (GlcNAc...) asparagine glycosylation sites follow: asparagine 269 and asparagine 284. A disulfide bond links cysteine 280 and cysteine 291. Glutamate 353 (charge relay system) is an active-site residue. N-linked (GlcNAc...) asparagine glycosylation is present at asparagine 369. A disulfide bond links cysteine 428 and cysteine 547. Catalysis depends on histidine 466, which acts as the Charge relay system. Asparagine 483, asparagine 509, asparagine 513, and asparagine 514 each carry an N-linked (GlcNAc...) asparagine glycan.

The protein belongs to the type-B carboxylesterase/lipase family. In terms of assembly, homotetramer; disulfide-linked. Dimer of dimers.

It is found in the secreted. It catalyses the reaction an acylcholine + H2O = a carboxylate + choline + H(+). In terms of biological role, esterase with broad substrate specificity. Contributes to the inactivation of the neurotransmitter acetylcholine. Can degrade neurotoxic organophosphate esters. This chain is Cholinesterase (BCHE), found in Panthera tigris tigris (Bengal tiger).